Reading from the N-terminus, the 381-residue chain is Dihydroorotate dehydrogenase (quinone) (381 aa).

FMN-binding positions include 77 to 81 (AGCDK) and Ala-101. Lys-81 is a substrate binding site. 126 to 129 (NRLG) contributes to the substrate binding site. FMN contacts are provided by Asn-158 and Asn-191. Position 191 (Asn-191) interacts with substrate. Ser-194 acts as the Nucleophile in catalysis. Residue Asn-196 participates in substrate binding. The FMN site is built by Lys-229 and Thr-257. Substrate is bound at residue 258–259 (NT). FMN contacts are provided by residues Gly-287, Gly-316, and 337–338 (YT).

It belongs to the dihydroorotate dehydrogenase family. Type 2 subfamily. Monomer. It depends on FMN as a cofactor.

It localises to the cell membrane. It carries out the reaction (S)-dihydroorotate + a quinone = orotate + a quinol. Its pathway is pyrimidine metabolism; UMP biosynthesis via de novo pathway; orotate from (S)-dihydroorotate (quinone route): step 1/1. In terms of biological role, catalyzes the conversion of dihydroorotate to orotate with quinone as electron acceptor. The polypeptide is Dihydroorotate dehydrogenase (quinone) (pyrD) (Synechocystis sp. (strain ATCC 27184 / PCC 6803 / Kazusa)).